We begin with the raw amino-acid sequence, 234 residues long: Carboxy-S-adenosyl-L-methionine synthase (234 aa).

S-adenosyl-L-methionine is bound by residues Y35, G60–S62, D109–I110, N124, and R191.

It belongs to the class I-like SAM-binding methyltransferase superfamily. Cx-SAM synthase family. As to quaternary structure, homodimer.

The catalysed reaction is prephenate + S-adenosyl-L-methionine = carboxy-S-adenosyl-L-methionine + 3-phenylpyruvate + H2O. Its function is as follows. Catalyzes the conversion of S-adenosyl-L-methionine (SAM) to carboxy-S-adenosyl-L-methionine (Cx-SAM). The polypeptide is Carboxy-S-adenosyl-L-methionine synthase (Campylobacter fetus subsp. fetus (strain 82-40)).